Consider the following 366-residue polypeptide: Phospho-N-acetylmuramoyl-pentapeptide-transferase (366 aa).

10 consecutive transmembrane segments (helical) span residues A27 to L47, T71 to A91, L93 to F113, L134 to I154, A174 to G194, G205 to A225, L245 to P265, A268 to V288, I294 to V314, and Q343 to L363.

The protein belongs to the glycosyltransferase 4 family. MraY subfamily. Mg(2+) is required as a cofactor.

It localises to the cell inner membrane. It catalyses the reaction UDP-N-acetyl-alpha-D-muramoyl-L-alanyl-gamma-D-glutamyl-meso-2,6-diaminopimeloyl-D-alanyl-D-alanine + di-trans,octa-cis-undecaprenyl phosphate = di-trans,octa-cis-undecaprenyl diphospho-N-acetyl-alpha-D-muramoyl-L-alanyl-D-glutamyl-meso-2,6-diaminopimeloyl-D-alanyl-D-alanine + UMP. It participates in cell wall biogenesis; peptidoglycan biosynthesis. Catalyzes the initial step of the lipid cycle reactions in the biosynthesis of the cell wall peptidoglycan: transfers peptidoglycan precursor phospho-MurNAc-pentapeptide from UDP-MurNAc-pentapeptide onto the lipid carrier undecaprenyl phosphate, yielding undecaprenyl-pyrophosphoryl-MurNAc-pentapeptide, known as lipid I. The sequence is that of Phospho-N-acetylmuramoyl-pentapeptide-transferase from Allorhizobium ampelinum (strain ATCC BAA-846 / DSM 112012 / S4) (Agrobacterium vitis (strain S4)).